The following is a 203-amino-acid chain: Transcriptional regulator GfcR (203 aa).

The protein belongs to the purine/pyrimidine phosphoribosyltransferase family. GfcR subfamily.

The polypeptide is Transcriptional regulator GfcR (Methanococcoides burtonii (strain DSM 6242 / NBRC 107633 / OCM 468 / ACE-M)).